The following is a 225-amino-acid chain: UPF0758 protein Ssed_0385 (225 aa).

The region spanning Ile-102–Ile-224 is the MPN domain. Zn(2+) is bound by residues His-173, His-175, and Asp-186. A JAMM motif motif is present at residues His-173–Asp-186.

Belongs to the UPF0758 family.

In Shewanella sediminis (strain HAW-EB3), this protein is UPF0758 protein Ssed_0385.